Reading from the N-terminus, the 682-residue chain is Potassium-transporting ATPase ATP-binding subunit (682 aa).

4 helical membrane-spanning segments follow: residues 34-54 (PVMFIVWIGSVVTTALAVAMA), 62-82 (AGFTGTISVWLWFTVLFANVA), 219-239 (IALTILLVALTIVFLLATATL), and 254-274 (VLVALLVCLIPTTIGGLLSAI). Residue aspartate 307 is the 4-aspartylphosphate intermediate of the active site. ATP-binding positions include aspartate 344, glutamate 348, 377–384 (FTAQTRMS), and lysine 395. Positions 518 and 522 each coordinate Mg(2+). The next 3 membrane-spanning stretches (helical) occupy residues 588–608 (FAIIPAAFAATYPQLNALNVM), 616–636 (AILSAVIFNALIIVFLIPLAL), and 662–682 (LVVPFIGIKIIDMLLTVFGLV).

Belongs to the cation transport ATPase (P-type) (TC 3.A.3) family. Type IA subfamily. The system is composed of three essential subunits: KdpA, KdpB and KdpC.

Its subcellular location is the cell inner membrane. The catalysed reaction is K(+)(out) + ATP + H2O = K(+)(in) + ADP + phosphate + H(+). Part of the high-affinity ATP-driven potassium transport (or Kdp) system, which catalyzes the hydrolysis of ATP coupled with the electrogenic transport of potassium into the cytoplasm. This subunit is responsible for energy coupling to the transport system and for the release of the potassium ions to the cytoplasm. The chain is Potassium-transporting ATPase ATP-binding subunit from Enterobacter sp. (strain 638).